The sequence spans 401 residues: G2/mitotic-specific cyclin-B1 (401 aa).

Disordered regions lie at residues 1 to 30 (MALR…PTLK) and 84 to 103 (KVQV…ETSG). A compositionally biased stretch (polar residues) spans 9–26 (RLASTRAEQGGKTCSVSG).

This sequence belongs to the cyclin family. Cyclin AB subfamily. In terms of assembly, interacts with the CDK1 protein kinase to form a serine/threonine kinase holoenzyme complex also known as maturation promoting factor (MPF). The cyclin subunit imparts substrate specificity to the complex.

Functionally, essential for the control of the cell cycle at the G2/M (mitosis) transition. The polypeptide is G2/mitotic-specific cyclin-B1 (ccnb1) (Oryzias javanicus (Javanese ricefish)).